A 216-amino-acid polypeptide reads, in one-letter code: GTP cyclohydrolase 1 2 (216 aa).

It belongs to the GTP cyclohydrolase I family. Homomer.

It carries out the reaction GTP + H2O = 7,8-dihydroneopterin 3'-triphosphate + formate + H(+). It functions in the pathway cofactor biosynthesis; 7,8-dihydroneopterin triphosphate biosynthesis; 7,8-dihydroneopterin triphosphate from GTP: step 1/1. The sequence is that of GTP cyclohydrolase 1 2 (folE2) from Nostoc sp. (strain PCC 7120 / SAG 25.82 / UTEX 2576).